Consider the following 1168-residue polypeptide: Transcription-repair-coupling factor (1168 aa).

One can recognise a Helicase ATP-binding domain in the interval 633–794 (DMQKSRPMDR…MLGVRDLSVI (162 aa)). 646–653 (GDVGYGKT) is a binding site for ATP. The DEEQ box motif lies at 747-750 (DEEQ). One can recognise a Helicase C-terminal domain in the interval 808–969 (VLEQNMSFIK…GFKIAMRDLN (162 aa)).

This sequence in the N-terminal section; belongs to the UvrB family. The protein in the C-terminal section; belongs to the helicase family. RecG subfamily.

It localises to the cytoplasm. Couples transcription and DNA repair by recognizing RNA polymerase (RNAP) stalled at DNA lesions. Mediates ATP-dependent release of RNAP and its truncated transcript from the DNA, and recruitment of nucleotide excision repair machinery to the damaged site. This is Transcription-repair-coupling factor from Staphylococcus aureus (strain MRSA252).